The sequence spans 452 residues: NADH-quinone oxidoreductase subunit N 2 (452 aa).

Transmembrane regions (helical) follow at residues 6–26, 33–53, 70–90, 97–117, 120–140, 154–174, 194–214, 232–252, 258–278, 286–306, 311–331, 355–375, 387–407, and 432–452; these read VLIPEISLLILAIISFFYGFI, TYILSFLSILTAIILSVFNFG, TLRILVLFIGVFIIGLSYSDL, SVEYVFLLLLSLFGMNLMIVA, LLILYLALETFSLSLYILAGF, YFILGTLSSIILLGSIVFFYA, ILLGVVFLISAFAFKLSLAPF, FLSTAPKVAVFGALINIFLSI, IQDLIVIISALSMLVGNVLAL, MLAYSSIAHAGYMFMAFLLPE, ISLIPYLIVYVFMNLSAFAFI, FCIIVIMFSLTGVPPTAGFIV, GYGSLVFFALLMSIFSAFYYL, and ALSGALLLIFLGLFPNLLLIF.

It belongs to the complex I subunit 2 family. NDH-1 is composed of 14 different subunits. Subunits NuoA, H, J, K, L, M, N constitute the membrane sector of the complex.

The protein localises to the cell inner membrane. It carries out the reaction a quinone + NADH + 5 H(+)(in) = a quinol + NAD(+) + 4 H(+)(out). Functionally, NDH-1 shuttles electrons from NADH, via FMN and iron-sulfur (Fe-S) centers, to quinones in the respiratory chain. The immediate electron acceptor for the enzyme in this species is believed to be ubiquinone. Couples the redox reaction to proton translocation (for every two electrons transferred, four hydrogen ions are translocated across the cytoplasmic membrane), and thus conserves the redox energy in a proton gradient. The chain is NADH-quinone oxidoreductase subunit N 2 from Thermodesulfovibrio yellowstonii (strain ATCC 51303 / DSM 11347 / YP87).